The primary structure comprises 336 residues: Eukaryotic translation initiation factor 3 subunit I (336 aa).

WD repeat units follow at residues 8 to 47 (GHER…RLGT), 50 to 91 (GHLG…KVWE), 146 to 185 (CNES…QLEN), 190 to 229 (EFDH…ILKT), and 287 to 326 (GHFG…FDFM).

The protein belongs to the eIF-3 subunit I family. Component of the eukaryotic translation initiation factor 3 (eIF-3) complex.

The protein resides in the cytoplasm. Component of the eukaryotic translation initiation factor 3 (eIF-3) complex, which is involved in protein synthesis of a specialized repertoire of mRNAs and, together with other initiation factors, stimulates binding of mRNA and methionyl-tRNAi to the 40S ribosome. The eIF-3 complex specifically targets and initiates translation of a subset of mRNAs involved in cell proliferation. The polypeptide is Eukaryotic translation initiation factor 3 subunit I (tif34) (Aspergillus terreus (strain NIH 2624 / FGSC A1156)).